A 209-amino-acid polypeptide reads, in one-letter code: ATP-dependent Clp protease proteolytic subunit 2 (209 aa).

Ser106 (nucleophile) is an active-site residue. Residue His131 is part of the active site.

The protein belongs to the peptidase S14 family. As to quaternary structure, fourteen ClpP subunits assemble into 2 heptameric rings which stack back to back to give a disk-like structure with a central cavity, resembling the structure of eukaryotic proteasomes.

Its subcellular location is the cytoplasm. It carries out the reaction Hydrolysis of proteins to small peptides in the presence of ATP and magnesium. alpha-casein is the usual test substrate. In the absence of ATP, only oligopeptides shorter than five residues are hydrolyzed (such as succinyl-Leu-Tyr-|-NHMec, and Leu-Tyr-Leu-|-Tyr-Trp, in which cleavage of the -Tyr-|-Leu- and -Tyr-|-Trp bonds also occurs).. Cleaves peptides in various proteins in a process that requires ATP hydrolysis. Has a chymotrypsin-like activity. Plays a major role in the degradation of misfolded proteins. This is ATP-dependent Clp protease proteolytic subunit 2 from Mesorhizobium japonicum (strain LMG 29417 / CECT 9101 / MAFF 303099) (Mesorhizobium loti (strain MAFF 303099)).